The chain runs to 122 residues: Large ribosomal subunit protein uL18 (122 aa).

Belongs to the universal ribosomal protein uL18 family. In terms of assembly, part of the 50S ribosomal subunit; part of the 5S rRNA/L5/L18/L25 subcomplex. Contacts the 5S and 23S rRNAs.

This is one of the proteins that bind and probably mediate the attachment of the 5S RNA into the large ribosomal subunit, where it forms part of the central protuberance. The sequence is that of Large ribosomal subunit protein uL18 from Desulforapulum autotrophicum (strain ATCC 43914 / DSM 3382 / VKM B-1955 / HRM2) (Desulfobacterium autotrophicum).